The following is a 589-amino-acid chain: uncharacterized protein (589 aa).

Disordered stretches follow at residues Leu328–Pro365, Ser379–Asn459, Arg525–Lys555, and Val569–Met589. Residues Val398 to Glu425 are compositionally biased toward polar residues. A compositionally biased stretch (basic and acidic residues) spans Thr426 to Asn445. Over residues Gln536–Gly545 the composition is skewed to acidic residues.

This is an uncharacterized protein from Mycosarcoma maydis (Corn smut fungus).